A 590-amino-acid polypeptide reads, in one-letter code: Laccase-19 (590 aa).

The N-terminal stretch at 1-28 (MEKLSMVTSLLCAITVAVLAVAVVSGEA) is a signal peptide. 2 consecutive Plastocyanin-like domains span residues 36–152 (VVHE…PRDG) and 161–315 (KDVP…YAGT). N-linked (GlcNAc...) asparagine glycosylation is found at asparagine 41 and asparagine 47. 2 residues coordinate Cu cation: histidine 86 and histidine 88. Asparagine 120 is a glycosylation site (N-linked (GlcNAc...) asparagine). 2 residues coordinate Cu cation: histidine 131 and histidine 133. N-linked (GlcNAc...) asparagine glycosylation is found at asparagine 205, asparagine 344, asparagine 378, asparagine 397, asparagine 434, and asparagine 465. The Plastocyanin-like 3 domain maps to 424–566 (DFPIRPPRPF…ATAFIVEDGP (143 aa)). 8 residues coordinate Cu cation: asparagine 483, histidine 486, histidine 488, histidine 545, cysteine 546, histidine 547, histidine 551, and methionine 556. A disordered region spans residues 565-590 (GPTPETSLPPPPPEFKRCGNNGLSQP).

The protein belongs to the multicopper oxidase family. Requires Cu cation as cofactor.

The protein localises to the secreted. It is found in the extracellular space. Its subcellular location is the apoplast. The enzyme catalyses 4 hydroquinone + O2 = 4 benzosemiquinone + 2 H2O. Functionally, lignin degradation and detoxification of lignin-derived products. This chain is Laccase-19 (LAC19), found in Oryza sativa subsp. japonica (Rice).